A 273-amino-acid polypeptide reads, in one-letter code: Ethanolamine ammonia-lyase small subunit (273 aa).

Positions 164, 185, and 214 each coordinate adenosylcob(III)alamin.

The protein belongs to the EutC family. In terms of assembly, the basic unit is a heterodimer which dimerizes to form tetramers. The heterotetramers trimerize; 6 large subunits form a core ring with 6 small subunits projecting outwards. Requires adenosylcob(III)alamin as cofactor.

It localises to the bacterial microcompartment. It carries out the reaction ethanolamine = acetaldehyde + NH4(+). Its pathway is amine and polyamine degradation; ethanolamine degradation. In terms of biological role, catalyzes the deamination of various vicinal amino-alcohols to oxo compounds. Allows this organism to utilize ethanolamine as the sole source of nitrogen and carbon in the presence of external vitamin B12. This Pseudomonas aeruginosa (strain UCBPP-PA14) protein is Ethanolamine ammonia-lyase small subunit.